The following is a 122-amino-acid chain: MDYEFKKNILDGHYYCHCSMDHEIVGRWVQEEIGKESTKIAQVLALIVAARSNPTEELCLNGTEISLMICGDEVTVQDNALLHSYELEAESEFELYDCESVACCGLEDFEQLIQQWQLFVRR.

It belongs to the UPF0231 family.

The sequence is that of UPF0231 protein VV1_1657 from Vibrio vulnificus (strain CMCP6).